The following is a 154-amino-acid chain: SsrA-binding protein (154 aa).

Belongs to the SmpB family.

Its subcellular location is the cytoplasm. Required for rescue of stalled ribosomes mediated by trans-translation. Binds to transfer-messenger RNA (tmRNA), required for stable association of tmRNA with ribosomes. tmRNA and SmpB together mimic tRNA shape, replacing the anticodon stem-loop with SmpB. tmRNA is encoded by the ssrA gene; the 2 termini fold to resemble tRNA(Ala) and it encodes a 'tag peptide', a short internal open reading frame. During trans-translation Ala-aminoacylated tmRNA acts like a tRNA, entering the A-site of stalled ribosomes, displacing the stalled mRNA. The ribosome then switches to translate the ORF on the tmRNA; the nascent peptide is terminated with the 'tag peptide' encoded by the tmRNA and targeted for degradation. The ribosome is freed to recommence translation, which seems to be the essential function of trans-translation. The chain is SsrA-binding protein from Synechococcus sp. (strain JA-3-3Ab) (Cyanobacteria bacterium Yellowstone A-Prime).